A 370-amino-acid chain; its full sequence is Histidinol-phosphate aminotransferase 1 (370 aa).

K222 bears the N6-(pyridoxal phosphate)lysine mark.

Belongs to the class-II pyridoxal-phosphate-dependent aminotransferase family. Histidinol-phosphate aminotransferase subfamily. In terms of assembly, homodimer. It depends on pyridoxal 5'-phosphate as a cofactor.

It carries out the reaction L-histidinol phosphate + 2-oxoglutarate = 3-(imidazol-4-yl)-2-oxopropyl phosphate + L-glutamate. The protein operates within amino-acid biosynthesis; L-histidine biosynthesis; L-histidine from 5-phospho-alpha-D-ribose 1-diphosphate: step 7/9. The protein is Histidinol-phosphate aminotransferase 1 (hisC1) of Bacillus anthracis.